Consider the following 600-residue polypeptide: Zinc metalloproteinase-disintegrin-like stejnihagin-B (600 aa).

Positions Met-1–Ser-20 are cleaved as a signal peptide. The propeptide occupies Ile-21 to Glu-191. Gln-192 carries the pyrrolidone carboxylic acid modification. In terms of domain architecture, Peptidase M12B spans Arg-198–Leu-389. 2 N-linked (GlcNAc...) asparagine glycosylation sites follow: Asn-261 and Asn-317. 3 cysteine pairs are disulfide-bonded: Cys-306–Cys-384, Cys-346–Cys-368, and Cys-348–Cys-351. His-331 provides a ligand contact to Zn(2+). Residue Glu-332 is part of the active site. 2 residues coordinate Zn(2+): His-335 and His-341. Residues Pro-397 to Asn-483 form the Disintegrin domain. Residues Val-399, Asn-402, Leu-404, Glu-406, Glu-409, and Asp-412 each contribute to the Ca(2+) site. Cystine bridges form between Cys-400-Cys-429, Cys-411-Cys-424, Cys-413-Cys-419, Cys-423-Cys-446, Cys-437-Cys-443, Cys-442-Cys-468, Cys-455-Cys-475, Cys-462-Cys-494, Cys-487-Cys-499, Cys-506-Cys-556, Cys-521-Cys-565, Cys-534-Cys-544, Cys-551-Cys-587, and Cys-581-Cys-593. Asn-425 is a glycosylation site (N-linked (GlcNAc...) asparagine). Residues Glu-461–Asp-463 carry the D/ECD-tripeptide motif. An N-linked (GlcNAc...) asparagine glycan is attached at Asn-467. Residue Asn-513 is glycosylated (N-linked (GlcNAc...) asparagine).

Belongs to the venom metalloproteinase (M12B) family. P-III subfamily. P-IIIa sub-subfamily. As to quaternary structure, monomer. Requires Zn(2+) as cofactor. As to expression, expressed by the venom gland.

It localises to the secreted. In terms of biological role, this metalloproteinase-disintegrin-like impairs hemostasis in the envenomed animal. This chain is Zinc metalloproteinase-disintegrin-like stejnihagin-B, found in Trimeresurus stejnegeri (Chinese green tree viper).